A 520-amino-acid chain; its full sequence is Acetyltransferase MAT1 (520 aa).

Catalysis depends on proton acceptor residues H183 and D456.

It belongs to the plant acyltransferase family.

The protein operates within secondary metabolite biosynthesis. Functionally, acyl-CoA-dependent acyltransferase; part of the gene cluster that mediates the biosynthesis of mannosylerythritol lipids (MELs), surface-active substances that enhance the availability of water-insoluble substrates. Depending on the number of acetyl groups, mannosylerythritol lipids can be differentiated into MEL A (fully acetylated), MEL B and MEL C (monoacetylated at R-6 and R-4, respectively), and the fully deacetylated MEL D. The first step in the pathway is the generation of mannosylerythritol by the glycosyltransferase EMT1 which catalyzes the transfer of GDP-mannose to the C-4 atom of meso-erythritol. This reaction has to be stereospecific, since only mannosyl-D-erythritol is generated. The produced disaccharide is subsequently acylated with fatty acids of various lengths by the acyltransferases MAC1 and MAC2 at positions C-2 and C-3, repectively. The existence of MEL derivatives which carry an acetyl group at C-2 implies that at least MAC1 also accepts acetyl-CoA as a donor. The final step of MEL biosynthesis is the acetylation of the fully acylated mannosylerythritol lipids catalyzed by the acetyl-CoA-dependent acetyltransferase MAT1. MAT1 displays a relaxed regioselectivity and is able to transfer acetylgroups to both positions C-4 and C-6 of the mannosyl moiety. The chain is Acetyltransferase MAT1 from Pseudozyma antarctica (strain T-34) (Yeast).